The following is a 170-amino-acid chain: Cathelicidin antimicrobial peptide (170 aa).

An N-terminal signal peptide occupies residues methionine 1–glycine 30. Residues arginine 31–lysine 131 constitute a propeptide, cathelin-like domain (CLD). Residues arginine 31–lysine 131 form a cathelin-like domain (CLD) region. Intrachain disulfides connect cysteine 86–cysteine 97 and cysteine 108–cysteine 125. The interval leucine 150–glycine 162 is active core.

The protein belongs to the cathelicidin family. In terms of assembly, monomer, homodimer or homotrimer (in vitro). Oligomerizes as tetra- or hexamer in solution (in vitro). In terms of processing, proteolytically cleaved by proteinase PRTN3 into antibacterial peptide LL-37. Proteolytically cleaved by cathepsin CTSG and neutrophil elastase ELANE. Resistant to proteolytic degradation in solution, and when bound to both zwitterionic (mimicking mammalian membranes) and negatively charged membranes (mimicking bacterial membranes). Post-translationally, after secretion onto the skin surface, the CAMP gene product is processed by a serine protease-dependent mechanism into multiple novel antimicrobial peptides distinct from and shorter than cathelicidin LL-37. These peptides show enhanced antimicrobial action, acquiring the ability to kill skin pathogens such as S.aureus, E.coli and C.albicans. These peptides have lost the ability to stimulate CXCL8/IL8 release from keratinocytes. The peptides act synergistically, killing bacteria at lower concentrations when present together, and maintain activity at increased salt condition.

The protein resides in the secreted. It is found in the vesicle. Antimicrobial protein that is an integral component of the innate immune system. Binds to bacterial lipopolysaccharides (LPS). Acts via neutrophil N-formyl peptide receptors to enhance the release of CXCL2. Postsecretory processing generates multiple cathelicidin antimicrobial peptides with various lengths which act as a topical antimicrobial defense in sweat on skin. The unprocessed precursor form, cathelicidin antimicrobial peptide, inhibits the growth of Gram-negative E.coli and E.aerogenes with efficiencies comparable to that of the mature peptide LL-37 (in vitro). Its function is as follows. Antimicrobial peptide that is an integral component of the innate immune system. Binds to bacterial lipopolysaccharides (LPS). Causes membrane permeabilization by forming transmembrane pores (in vitro). Causes lysis of E.coli. Exhibits antimicrobial activity against Gram-negative bacteria such as P.aeruginosa, S.typhimurium, E.aerogenes, E.coli and P.syringae, Gram-positive bacteria such as L.monocytogenes, S.epidermidis, S.pyogenes and S.aureus, as well as vancomycin-resistant enterococci (in vitro). Exhibits antimicrobial activity against methicillin-resistant S.aureus, P.mirabilis, and C.albicans in low-salt media, but not in media containing 100 mM NaCl (in vitro). Forms chiral supramolecular assemblies with quinolone signal (PQS) molecules of P.aeruginosa, which may lead to interference of bacterial quorum signaling and perturbance of bacterial biofilm formation. May form supramolecular fiber-like assemblies on bacterial membranes. Induces cytokine and chemokine producation as well as TNF/TNFA and CSF2/GMCSF production in normal human keratinocytes. Exhibits hemolytic activity against red blood cells. Functionally, exhibits antimicrobial activity against E.coli and B.megaterium (in vitro). The protein is Cathelicidin antimicrobial peptide of Saguinus oedipus (Cotton-top tamarin).